We begin with the raw amino-acid sequence, 176 residues long: Small ribosomal subunit protein uS5 (176 aa).

Residues 11–74 enclose the S5 DRBM domain; it reads LSEVLVDVNR…QAAKKKMMKV (64 aa).

The protein belongs to the universal ribosomal protein uS5 family. Part of the 30S ribosomal subunit. Contacts proteins S4 and S8.

Its function is as follows. With S4 and S12 plays an important role in translational accuracy. Functionally, located at the back of the 30S subunit body where it stabilizes the conformation of the head with respect to the body. In Rickettsia bellii (strain RML369-C), this protein is Small ribosomal subunit protein uS5.